Reading from the N-terminus, the 596-residue chain is Choline dehydrogenase, mitochondrial (596 aa).

A mitochondrion-targeting transit peptide spans Met-1–Ala-34. Thr-44–Glu-73 serves as a coordination point for FAD. Lys-438 is subject to N6-succinyllysine. Residues Lys-486 and Lys-498 each carry the N6-acetyllysine; alternate modification. An N6-succinyllysine; alternate mark is found at Lys-486 and Lys-498. Catalysis depends on His-513, which acts as the Proton acceptor. Lys-582 is modified (N6-acetyllysine).

It belongs to the GMC oxidoreductase family. FAD is required as a cofactor. Acetylation of Lys-498 is observed in liver mitochondria from fasted mice but not from fed mice.

It is found in the mitochondrion inner membrane. The enzyme catalyses choline + A = betaine aldehyde + AH2. The protein operates within amine and polyamine biosynthesis; betaine biosynthesis via choline pathway; betaine aldehyde from choline (cytochrome c reductase route): step 1/1. This is Choline dehydrogenase, mitochondrial (Chdh) from Mus musculus (Mouse).